The following is an 81-amino-acid chain: Dermaseptin-B2 (81 aa).

An N-terminal signal peptide occupies residues Met-1–Cys-22. Residues Glu-23–Met-43 constitute a propeptide that is removed on maturation. A disordered region spans residues Glu-24–Gly-46. Positions Glu-30–Gln-40 are enriched in acidic residues. A hinge region that separates the two alpha-helices that constitute the peptide region spans residues Val-54–Gly-55. Position 78 is a valine amide (Val-78). Positions Glu-80 to Gln-81 are excised as a propeptide.

Post-translationally, amidation permits an increased antimicrobial activity against some microorganisms such as T.album and S.cerevisiae. May contain a D-amino acid residue, since the natural peptide is not identical in chromatographic properties to the synthetic peptide. Expressed by the skin glands.

The protein localises to the secreted. The protein resides in the target cell membrane. In terms of biological role, cationic amphipathic alpha-helical antimicrobial peptide with potent activity against Gram-negative and Gram-positive bacteria, fungi and protozoa. Acts in a synergistic effect in combination with Plasticin-B1 at doses that are not active alone. Acts by disturbing membrane functions. On model membranes, induces a strong perturbation of anionic lipid bilayers, resides at the hydrocarbon core-water interface, parallel to the plane of the membrane, and interacts preferentially with the polar head groups and glycerol backbone region of the anionic phospholipids, as well as the region of the lipid acyl chain near the bilayer surface. Induces a positive curvature of the bilayer and clustering of anionic lipids, consistent with a carpet mechanism, that may lead to the formation of mixed peptide-phospholipid toroidal, transient pores and membrane permeation/disruption once a threshold peptide accumulation is reached. Also enhances binding of agonists to adenosine A1 receptors (ADORA1), adenosine A2a receptors (ADORA2A), alpha-2 adrenergic receptors (ADRA2A) and 5-hydroxytryptamine 1A receptors (HTR1A). In addition, it enhances guanyl nucleotide exchange which may result in the conversion of receptors to a high affinity state complexed with guanyl nucleotide free G-protein. Affects human behavior eliciting profound malaise, followed by listlessness and then euphoria. Does not show cytotoxic activity on CHO cells. Does not act as a chemoattractant. Does not show hemolytic activity. The protein is Dermaseptin-B2 (ADR) of Phyllomedusa bicolor (Two-colored leaf frog).